The following is a 502-amino-acid chain: Lysine--tRNA ligase (502 aa).

The Mg(2+) site is built by Glu-398 and Glu-405.

This sequence belongs to the class-II aminoacyl-tRNA synthetase family. In terms of assembly, homodimer. The cofactor is Mg(2+).

The protein localises to the cytoplasm. The enzyme catalyses tRNA(Lys) + L-lysine + ATP = L-lysyl-tRNA(Lys) + AMP + diphosphate. This chain is Lysine--tRNA ligase, found in Thermosipho melanesiensis (strain DSM 12029 / CIP 104789 / BI429).